We begin with the raw amino-acid sequence, 65 residues long: Large ribosomal subunit protein bL35 (65 aa).

Over residues M1 to K16 the composition is skewed to basic residues. Residues M1–S39 form a disordered region.

It belongs to the bacterial ribosomal protein bL35 family.

In Tropheryma whipplei (strain TW08/27) (Whipple's bacillus), this protein is Large ribosomal subunit protein bL35.